The following is a 534-amino-acid chain: Glucose-6-phosphate isomerase (534 aa).

Catalysis depends on E356, which acts as the Proton donor. Residues H387 and K502 contribute to the active site.

It belongs to the GPI family.

It localises to the cytoplasm. The catalysed reaction is alpha-D-glucose 6-phosphate = beta-D-fructose 6-phosphate. Its pathway is carbohydrate biosynthesis; gluconeogenesis. It participates in carbohydrate degradation; glycolysis; D-glyceraldehyde 3-phosphate and glycerone phosphate from D-glucose: step 2/4. Catalyzes the reversible isomerization of glucose-6-phosphate to fructose-6-phosphate. The sequence is that of Glucose-6-phosphate isomerase from Desulfotalea psychrophila (strain LSv54 / DSM 12343).